The following is a 176-amino-acid chain: Skp1-related protein (176 aa).

This sequence belongs to the SKP1 family. In terms of assembly, probable component of the SCF(sel-10) E3 ubiquitin-protein ligase complex containing F-box domain-containing protein sel-10 as the substrate recognition component. Interacts with cul-1. May interact with the F-box protein mec-15. Interacts with dre-1. Interacts with syg-1. Interacts with sel-10. As to expression, ubiquitously expressed in the adult.

Its function is as follows. Probable essential component of SCF (SKP1-CUL1-F-box protein) E3 ubiquitin-protein ligase complexes, which mediate the ubiquitination and subsequent proteasomal degradation of target proteins. Regulates cell proliferation during embryonic and larval development. Involved in synapse elimination in early synapse development. May negatively regulate the apoptotic activity of cep-1 in response to genotoxic stress. Plays a role in sex determination. This chain is Skp1-related protein, found in Caenorhabditis elegans.